A 69-amino-acid polypeptide reads, in one-letter code: Large ribosomal subunit protein uL29 (69 aa).

This sequence belongs to the universal ribosomal protein uL29 family.

The sequence is that of Large ribosomal subunit protein uL29 from Mycoplasmopsis agalactiae (strain NCTC 10123 / CIP 59.7 / PG2) (Mycoplasma agalactiae).